The sequence spans 161 residues: MRVAIYPGSFDPITEGHLDIIKRASKVFDEVIVSVLVNPDKKGLFSIEERVKLIEKVTEDIDNVKAESFEGLLVDYMKEKDAKVIIKGLRVVSDFEYELQMAHMNKKLDSSIETVFMMTNAKYSYLSSSSIKQVVMFGGCIEGLVPNKIIKDIINKIGKVR.

S9 is a binding site for substrate. ATP is bound by residues 9–10 (SF) and H17. Positions 41, 73, and 87 each coordinate substrate. Residues 88 to 90 (GLR), E98, and 123 to 129 (YSYLSSS) each bind ATP.

This sequence belongs to the bacterial CoaD family. As to quaternary structure, homohexamer. Mg(2+) serves as cofactor.

The protein localises to the cytoplasm. The enzyme catalyses (R)-4'-phosphopantetheine + ATP + H(+) = 3'-dephospho-CoA + diphosphate. The protein operates within cofactor biosynthesis; coenzyme A biosynthesis; CoA from (R)-pantothenate: step 4/5. In terms of biological role, reversibly transfers an adenylyl group from ATP to 4'-phosphopantetheine, yielding dephospho-CoA (dPCoA) and pyrophosphate. In Clostridium novyi (strain NT), this protein is Phosphopantetheine adenylyltransferase.